Reading from the N-terminus, the 891-residue chain is Major core protein 4a precursor (891 aa).

It belongs to the poxviridae protein P4a family. Interacts with P39/A4.

It is found in the virion. Its function is as follows. Core protein 4a is the most abundant virion protein. Major component of the virion core that undergoes proteolytic processing during the immature virion (IV) to mature virion (MV) transition. This Fowlpox virus (strain NVSL) (FPV) protein is Major core protein 4a precursor.